Reading from the N-terminus, the 1059-residue chain is Carbamoyl phosphate synthase large chain (1059 aa).

Residues 1-401 (MPKRTDIKKI…SLLKACRSLE (401 aa)) form a carboxyphosphate synthetic domain region. The ATP site is built by arginine 129, arginine 169, glycine 175, glycine 176, arginine 208, isoleucine 210, glutamate 215, glycine 241, isoleucine 242, histidine 243, glutamine 284, and glutamate 298. The region spanning 133–327 (KQLMEDLEQP…IAKLAAKIAV (195 aa)) is the ATP-grasp 1 domain. Positions 284, 298, and 300 each coordinate Mg(2+). The Mn(2+) site is built by glutamine 284, glutamate 298, and asparagine 300. Residues 402–546 (IGVYHNEMPE…YSTYEWENES (145 aa)) form an oligomerization domain region. Residues 547–929 (IKSEKESVIV…ALYKAFEASY (383 aa)) form a carbamoyl phosphate synthetic domain region. An ATP-grasp 2 domain is found at 671-861 (EQALKDLNIP…MAQIATKLIL (191 aa)). Residues arginine 707, serine 746, leucine 748, glutamate 752, glycine 777, valine 778, histidine 779, serine 780, glutamine 820, and glutamate 832 each contribute to the ATP site. Residues glutamine 820, glutamate 832, and asparagine 834 each coordinate Mg(2+). The Mn(2+) site is built by glutamine 820, glutamate 832, and asparagine 834. The region spanning 930–1059 (FHLPAFGNVI…ESRGFITQAI (130 aa)) is the MGS-like domain. An allosteric domain region spans residues 930-1059 (FHLPAFGNVI…ESRGFITQAI (130 aa)).

It belongs to the CarB family. As to quaternary structure, composed of two chains; the small (or glutamine) chain promotes the hydrolysis of glutamine to ammonia, which is used by the large (or ammonia) chain to synthesize carbamoyl phosphate. Tetramer of heterodimers (alpha,beta)4. Requires Mg(2+) as cofactor. It depends on Mn(2+) as a cofactor.

The enzyme catalyses hydrogencarbonate + L-glutamine + 2 ATP + H2O = carbamoyl phosphate + L-glutamate + 2 ADP + phosphate + 2 H(+). It catalyses the reaction hydrogencarbonate + NH4(+) + 2 ATP = carbamoyl phosphate + 2 ADP + phosphate + 2 H(+). The protein operates within amino-acid biosynthesis; L-arginine biosynthesis; carbamoyl phosphate from bicarbonate: step 1/1. Its pathway is pyrimidine metabolism; UMP biosynthesis via de novo pathway; (S)-dihydroorotate from bicarbonate: step 1/3. In terms of biological role, large subunit of the glutamine-dependent carbamoyl phosphate synthetase (CPSase). CPSase catalyzes the formation of carbamoyl phosphate from the ammonia moiety of glutamine, carbonate, and phosphate donated by ATP, constituting the first step of 2 biosynthetic pathways, one leading to arginine and/or urea and the other to pyrimidine nucleotides. The large subunit (synthetase) binds the substrates ammonia (free or transferred from glutamine from the small subunit), hydrogencarbonate and ATP and carries out an ATP-coupled ligase reaction, activating hydrogencarbonate by forming carboxy phosphate which reacts with ammonia to form carbamoyl phosphate. The polypeptide is Carbamoyl phosphate synthase large chain (Streptococcus mutans serotype c (strain ATCC 700610 / UA159)).